The chain runs to 547 residues: DNA polymerase kappa (547 aa).

The segment at 18 to 39 (LTIEDDGSSSSDEEATLKRRLA) is disordered. A compositionally biased stretch (acidic residues) spans 20 to 31 (IEDDGSSSSDEE). The UmuC domain occupies 132–316 (IVHVDCDAFY…LPVREVSGIG (185 aa)). Mg(2+) is bound by residues Asp-136 and Asp-226. The UBZ4-type zinc finger occupies 489–518 (TVPCPVCQKNIENELGILNQHVDLCLNVET). The Zn(2+) site is built by Cys-492, Cys-495, His-509, and Cys-513.

As to quaternary structure, interacts with hus1 and rad17.

It localises to the cytoplasm. Its subcellular location is the nucleus. It carries out the reaction DNA(n) + a 2'-deoxyribonucleoside 5'-triphosphate = DNA(n+1) + diphosphate. Its function is as follows. DNA polymerase specifically involved in DNA repair. Plays an important role in translesion synthesis, where the normal high-fidelity DNA polymerases cannot proceed and DNA synthesis stalls. Has a role in meiosis. The sequence is that of DNA polymerase kappa (mug40) from Schizosaccharomyces pombe (strain 972 / ATCC 24843) (Fission yeast).